The following is a 223-amino-acid chain: Small ribosomal subunit protein uS5 (223 aa).

Residues 1 to 15 show a composition bias toward low complexity; that stretch reads MTEAVAAEATETAPA. Residues 1 to 51 form a disordered region; sequence MTEAVAAEATETAPATDDRRGGRRGERGDRGQGRGDRGGRGGRDGGREAEK. The segment covering 16–51 has biased composition (basic and acidic residues); that stretch reads TDDRRGGRRGERGDRGQGRGDRGGRGGRDGGREAEK. The S5 DRBM domain occupies 54-117; that stretch reads FVERVVTINR…EEAKKSFFRV (64 aa).

It belongs to the universal ribosomal protein uS5 family. As to quaternary structure, part of the 30S ribosomal subunit. Contacts proteins S4 and S8.

Its function is as follows. With S4 and S12 plays an important role in translational accuracy. Located at the back of the 30S subunit body where it stabilizes the conformation of the head with respect to the body. The protein is Small ribosomal subunit protein uS5 of Paenarthrobacter aurescens (strain TC1).